The following is an 88-amino-acid chain: LYR motif-containing protein 2 (88 aa).

Residues 1–19 constitute a mitochondrion transit peptide; the sequence is MAASRLPPATLTLKQFVRR.

The protein belongs to the complex I LYR family.

The protein resides in the mitochondrion. Its function is as follows. Involved in efficient integration of the N-module into mitochondrial respiratory chain complex I. This is LYR motif-containing protein 2 (LYRM2) from Homo sapiens (Human).